The primary structure comprises 350 residues: Dihydroorotate dehydrogenase (quinone) (350 aa).

FMN-binding positions include 67–71 (AGFDK) and glycine 91. Residue lysine 71 coordinates substrate. 116–120 (NRMGF) contacts substrate. Asparagine 144 and asparagine 177 together coordinate FMN. Residue asparagine 177 coordinates substrate. Serine 180 (nucleophile) is an active-site residue. Residue asparagine 182 coordinates substrate. The FMN site is built by lysine 213 and threonine 241. 242–243 (NT) contacts substrate. The segment at 249–268 (ASLHSDAADEEGGLSGAPIT) is disordered. FMN is bound by residues glycine 264, glycine 291, and 312–313 (YT).

This sequence belongs to the dihydroorotate dehydrogenase family. Type 2 subfamily. As to quaternary structure, monomer. Requires FMN as cofactor.

The protein localises to the cell membrane. The enzyme catalyses (S)-dihydroorotate + a quinone = orotate + a quinol. The protein operates within pyrimidine metabolism; UMP biosynthesis via de novo pathway; orotate from (S)-dihydroorotate (quinone route): step 1/1. Functionally, catalyzes the conversion of dihydroorotate to orotate with quinone as electron acceptor. The sequence is that of Dihydroorotate dehydrogenase (quinone) from Natronomonas pharaonis (strain ATCC 35678 / DSM 2160 / CIP 103997 / JCM 8858 / NBRC 14720 / NCIMB 2260 / Gabara) (Halobacterium pharaonis).